The chain runs to 298 residues: Ankyrin repeat domain-containing protein 29 (298 aa).

8 ANK repeats span residues 8–38 (PLAN…DVDC), 42–71 (YGTT…DINL), 75–104 (TGST…STEF), 108–137 (DGGT…NVHD), 141–170 (DGAT…KVNQ), 174–203 (DGTA…DRDA), 207–236 (DGST…SLGI), and 239–268 (NGST…DPAL).

The sequence is that of Ankyrin repeat domain-containing protein 29 (ankrd29) from Danio rerio (Zebrafish).